Here is a 108-residue protein sequence, read N- to C-terminus: Abscisic stress-ripening protein 3 (108 aa).

Disordered stretches follow at residues 1 to 34 (MAEE…HHSH) and 84 to 108 (FAFH…GRHH). Over residues 15 to 24 (NREEEGGPVD) the composition is skewed to basic and acidic residues. Over residues 25 to 34 (HKKKVKHHSH) the composition is skewed to basic residues. Basic and acidic residues predominate over residues 95–108 (AKKEKKAAEKGRHH).

It belongs to the abscisic acid and water stress-induced protein family.

The sequence is that of Abscisic stress-ripening protein 3 from Solanum lycopersicum (Tomato).